Here is a 378-residue protein sequence, read N- to C-terminus: Acetylornithine deacetylase (378 aa).

Position 76 (His76) interacts with Zn(2+). Residue Asp78 is part of the active site. Residue Asp108 participates in Zn(2+) binding. Glu140 is an active-site residue. Positions 141, 165, and 351 each coordinate Zn(2+).

This sequence belongs to the peptidase M20A family. ArgE subfamily. As to quaternary structure, homodimer. The cofactor is Zn(2+). Requires Co(2+) as cofactor. Glutathione serves as cofactor.

The protein localises to the cytoplasm. The catalysed reaction is N(2)-acetyl-L-ornithine + H2O = L-ornithine + acetate. Its pathway is amino-acid biosynthesis; L-arginine biosynthesis; L-ornithine from N(2)-acetyl-L-ornithine (linear): step 1/1. Its function is as follows. Catalyzes the hydrolysis of the amide bond of N(2)-acetylated L-amino acids. Cleaves the acetyl group from N-acetyl-L-ornithine to form L-ornithine, an intermediate in L-arginine biosynthesis pathway, and a branchpoint in the synthesis of polyamines. In Aliivibrio salmonicida (strain LFI1238) (Vibrio salmonicida (strain LFI1238)), this protein is Acetylornithine deacetylase.